We begin with the raw amino-acid sequence, 143 residues long: Small ribosomal subunit protein uS12B (143 aa).

Residue proline 62 is modified to 3,4-dihydroxyproline.

Belongs to the universal ribosomal protein uS12 family. In terms of assembly, component of the small ribosomal subunit (SSU). Mature yeast ribosomes consist of a small (40S) and a large (60S) subunit. The 40S small subunit contains 1 molecule of ribosomal RNA (18S rRNA) and at least 33 different proteins. The large 60S subunit contains 3 rRNA molecules (25S, 5.8S and 5S rRNA) and at least 46 different proteins. In terms of processing, hydroxylation at Pro-62 affects translation termination efficiency.

The protein localises to the cytoplasm. It localises to the nucleus. The protein resides in the nucleolus. Functionally, component of the ribosome, a large ribonucleoprotein complex responsible for the synthesis of proteins in the cell. The small ribosomal subunit (SSU) binds messenger RNAs (mRNAs) and translates the encoded message by selecting cognate aminoacyl-transfer RNA (tRNA) molecules. The large subunit (LSU) contains the ribosomal catalytic site termed the peptidyl transferase center (PTC), which catalyzes the formation of peptide bonds, thereby polymerizing the amino acids delivered by tRNAs into a polypeptide chain. The nascent polypeptides leave the ribosome through a tunnel in the LSU and interact with protein factors that function in enzymatic processing, targeting, and the membrane insertion of nascent chains at the exit of the ribosomal tunnel. This Schizosaccharomyces pombe (strain 972 / ATCC 24843) (Fission yeast) protein is Small ribosomal subunit protein uS12B (rps2302).